Here is a 228-residue protein sequence, read N- to C-terminus: Ribulose-phosphate 3-epimerase (228 aa).

Substrate is bound at residue Ser-9. 4 residues coordinate a divalent metal cation: His-34, Asp-36, His-68, and Asp-177. Asp-36 (proton acceptor) is an active-site residue. Substrate is bound by residues His-68, Asp-177–Gly-179, and Gly-199–Ser-200. Residue Asp-177 is the Proton donor of the active site.

Belongs to the ribulose-phosphate 3-epimerase family. A divalent metal cation serves as cofactor.

It carries out the reaction D-ribulose 5-phosphate = D-xylulose 5-phosphate. Its pathway is carbohydrate degradation. Catalyzes the reversible epimerization of D-ribulose 5-phosphate to D-xylulose 5-phosphate. This Buchnera aphidicola subsp. Schizaphis graminum (strain Sg) protein is Ribulose-phosphate 3-epimerase.